Here is a 172-residue protein sequence, read N- to C-terminus: Lipoprotein signal peptidase (172 aa).

4 helical membrane-spanning segments follow: residues 4–24, 39–59, 69–89, and 93–113; these read LSSSAITTTWLAMIIIVLDQV, VAILPHLNLTLVYNYGAAFSF, WFFTALALVVGTALVIWLAKL, and WTLEVVAINLVLSGAIGNVID. Catalysis depends on residues Asp122 and Asp140. The chain crosses the membrane as a helical span at residues 136–156; sequence FNVADMGISIGAVLLIISEFW.

The protein belongs to the peptidase A8 family.

It is found in the cell inner membrane. The enzyme catalyses Release of signal peptides from bacterial membrane prolipoproteins. Hydrolyzes -Xaa-Yaa-Zaa-|-(S,diacylglyceryl)Cys-, in which Xaa is hydrophobic (preferably Leu), and Yaa (Ala or Ser) and Zaa (Gly or Ala) have small, neutral side chains.. It participates in protein modification; lipoprotein biosynthesis (signal peptide cleavage). This protein specifically catalyzes the removal of signal peptides from prolipoproteins. This chain is Lipoprotein signal peptidase, found in Hydrogenovibrio crunogenus (strain DSM 25203 / XCL-2) (Thiomicrospira crunogena).